The sequence spans 100 residues: Urease subunit gamma (100 aa).

This sequence belongs to the urease gamma subunit family. Heterotrimer of UreA (gamma), UreB (beta) and UreC (alpha) subunits. Three heterotrimers associate to form the active enzyme.

The protein localises to the cytoplasm. It catalyses the reaction urea + 2 H2O + H(+) = hydrogencarbonate + 2 NH4(+). It functions in the pathway nitrogen metabolism; urea degradation; CO(2) and NH(3) from urea (urease route): step 1/1. The protein is Urease subunit gamma of Ralstonia pickettii (strain 12J).